The following is a 932-amino-acid chain: Protocadherin gamma-A6 (932 aa).

The signal sequence occupies residues 1–29; it reads MAPPQRHPQRSEQVLLLTLLGTLWGAAAA. Cadherin domains are found at residues 30 to 133, 134 to 242, 243 to 347, 348 to 452, 453 to 562, and 570 to 682; these read QIRY…TPRF, LKEE…TPVF, TQPV…VPEV, VVTS…PPTF, PHSS…APEI, and DGST…EPSA. At 30–692 the chain is on the extracellular side; it reads QIRYSIPEEL…KPNDSDLTLY (663 aa). N-linked (GlcNAc...) asparagine glycosylation is present at N81. Residues N419 and N545 are each glycosylated (N-linked (GlcNAc...) asparagine). N-linked (GlcNAc...) asparagine glycosylation occurs at N685. A helical transmembrane segment spans residues 693–713; sequence LVVAVAAVSCVFLAFVIVLLA. At 714 to 932 the chain is on the cytoplasmic side; the sequence is LRLQRWHKSR…KKKSGKKEKK (219 aa). Disordered stretches follow at residues 803 to 841 and 902 to 932; these read DPRQ…WPNN and ATLT…KEKK. Over residues 806–841 the composition is skewed to polar residues; that stretch reads QLQQAPPNTDWRFSQAQRPGTSGSQNGDDTGTWPNN. Residues 922–932 show a composition bias toward basic residues; sequence NKKKSGKKEKK.

It is found in the cell membrane. Its function is as follows. Potential calcium-dependent cell-adhesion protein. May be involved in the establishment and maintenance of specific neuronal connections in the brain. This is Protocadherin gamma-A6 (PCDHGA6) from Pan troglodytes (Chimpanzee).